Consider the following 261-residue polypeptide: CD40 ligand (261 aa).

At 1-22 the chain is on the cytoplasmic side; sequence MIETYNQTSPRSAATGLPISMK. Residues 23-46 traverse the membrane as a helical; Signal-anchor for type II membrane protein segment; sequence IFMYLLTVFLITQMIGSALFAVYL. Topologically, residues 47-261 are extracellular; sequence HRRLDKIEDE…GFTSFGLLKL (215 aa). The region spanning 122–261 is the THD domain; the sequence is IAAHVISEAS…GFTSFGLLKL (140 aa). A disulfide bridge links Cys-178 with Cys-218. Asn-240 is a glycosylation site (N-linked (GlcNAc...) (complex) asparagine; alternate). N-linked (GlcNAc...) (high mannose) asparagine; alternate glycosylation is present at Asn-240.

Belongs to the tumor necrosis factor family. In terms of assembly, homotrimer. Interacts with isoform 3 of CD28. CD40 ligand, soluble form: Exists as either a monomer or a homotrimer. Forms a ternary complex between CD40 and integrins for CD40-CD40LG signaling. In terms of processing, the soluble form derives from the membrane form by proteolytic processing. N-linked glycan is a mixture of high mannose and complex type. Glycan structure does not influence binding affinity to CD40. Post-translationally, not O-glycosylated. Specifically expressed on activated CD4+ T-lymphocytes.

The protein resides in the cell membrane. The protein localises to the cell surface. It localises to the secreted. Functionally, cytokine that acts as a ligand to CD40/TNFRSF5. Costimulates T-cell proliferation and cytokine production. Its cross-linking on T-cells generates a costimulatory signal which enhances the production of IL4 and IL10 in conjunction with the TCR/CD3 ligation and CD28 costimulation. Induces the activation of NF-kappa-B. Induces the activation of kinases MAPK8 and PAK2 in T-cells. Induces tyrosine phosphorylation of isoform 3 of CD28. Mediates B-cell proliferation in the absence of co-stimulus as well as IgE production in the presence of IL4. Involved in immunoglobulin class switching. Acts as a ligand for integrins, specifically ITGA5:ITGB1 and ITGAV:ITGB3; both integrins and the CD40 receptor are required for activation of CD40-CD40LG signaling, which have cell-type dependent effects, such as B-cell activation, NF-kappa-B signaling and anti-apoptotic signaling. The chain is CD40 ligand (CD40LG) from Homo sapiens (Human).